A 229-amino-acid chain; its full sequence is Large ribosomal subunit protein uL1 (229 aa).

It belongs to the universal ribosomal protein uL1 family. In terms of assembly, part of the 50S ribosomal subunit.

Functionally, binds directly to 23S rRNA. The L1 stalk is quite mobile in the ribosome, and is involved in E site tRNA release. In terms of biological role, protein L1 is also a translational repressor protein, it controls the translation of the L11 operon by binding to its mRNA. This is Large ribosomal subunit protein uL1 from Ureaplasma urealyticum serovar 10 (strain ATCC 33699 / Western).